A 165-amino-acid polypeptide reads, in one-letter code: Pro-MCH (165 aa).

The signal sequence occupies residues 1-21 (MAKMTLSSYMLMLAFSLFSQG). A disordered region spans residues 66–89 (YKNDESGFMNDDDNKNSKNTGSKQ). Position 143 is an isoleucine amide (isoleucine 143). Cysteine 153 and cysteine 162 are joined by a disulfide.

This sequence belongs to the MCH family. Post-translationally, pro-MCH is processed differentially in the brain and in peripheral organs producing two neuropeptides; NEI and MCH. A third peptide, NGE, may also be produced. Preferential processing in neurons by prohormone convertase 2 (PC2) generates NEI. MCH is generated in neurons of the lateral hypothalmic area by several prohormone convertases including PC1/3, PC2 and PC5/6. Predominantly expressed in hypothalamus. Also found in heart, intestine, spleen and testis (spermatogonia, early spermatocytes and Sertoli cells). In brain only mature MCH and NEI peptides are present. In peripheral tissues a large product, encompassing the NEI and MCH domains of the precursor, is found predominantly.

Its subcellular location is the secreted. Functionally, MCH may act as a neurotransmitter or neuromodulator in a broad array of neuronal functions directed toward the regulation of goal-directed behavior, such as food intake, and general arousal. This chain is Pro-MCH (Pmch), found in Mus musculus (Mouse).